The following is a 253-amino-acid chain: MRVIMAEVFNSWQGEGGSVEGSAFGRRQIFVRFAGCDLHCAWCDSREYIDASRVSSWRYEVKPFTGRFEYRPNPASVEEVVEAVLRLDTGDIHSISYTGGEPTLQVKPLMALMERMKELGFDNFLETHGGLPELIRDVAPLTDYASVDIKDESAKATEDWKGLVLREVESIRILKEAGAKTYAKLVVTSETKVENVQWYASLLKGLAPLVIQPREPIEVSQAKLMEFYREAARIMGRKNVGLSFQVHKYLNVL.

Substrate contacts are provided by residues 12–14 (WQG) and arginine 32. In terms of domain architecture, Radical SAM core spans 23-253 (AFGRRQIFVR…FQVHKYLNVL (231 aa)). [4Fe-4S] cluster is bound by residues cysteine 36, cysteine 40, and cysteine 43. Serine 45 serves as a coordination point for Mg(2+). Threonine 98 contacts substrate. Glycine 100 provides a ligand contact to S-adenosyl-L-methionine.

Belongs to the radical SAM superfamily. 7-carboxy-7-deazaguanine synthase family. Homodimer. The cofactor is [4Fe-4S] cluster. S-adenosyl-L-methionine serves as cofactor. Mg(2+) is required as a cofactor.

The enzyme catalyses 6-carboxy-5,6,7,8-tetrahydropterin + H(+) = 7-carboxy-7-deazaguanine + NH4(+). The protein operates within purine metabolism; 7-cyano-7-deazaguanine biosynthesis. Functionally, catalyzes the complex heterocyclic radical-mediated conversion of 6-carboxy-5,6,7,8-tetrahydropterin (CPH4) to 7-carboxy-7-deazaguanine (CDG), a step common to the biosynthetic pathways of all 7-deazapurine-containing compounds. The protein is 7-carboxy-7-deazaguanine synthase of Thermococcus kodakarensis (strain ATCC BAA-918 / JCM 12380 / KOD1) (Pyrococcus kodakaraensis (strain KOD1)).